Here is a 310-residue protein sequence, read N- to C-terminus: tRNA uridine(34) hydroxylase (310 aa).

In terms of domain architecture, Rhodanese spans 127–225; sequence KDKDTIVIDT…YLEDISKEES (99 aa). Cysteine 185 acts as the Cysteine persulfide intermediate in catalysis.

This sequence belongs to the TrhO family.

It catalyses the reaction uridine(34) in tRNA + AH2 + O2 = 5-hydroxyuridine(34) in tRNA + A + H2O. In terms of biological role, catalyzes oxygen-dependent 5-hydroxyuridine (ho5U) modification at position 34 in tRNAs. This chain is tRNA uridine(34) hydroxylase, found in Prochlorococcus marinus (strain MIT 9515).